A 30-amino-acid polypeptide reads, in one-letter code: MPFSPDIAYSINYALGKYFFHRISHFLESA.

This is an uncharacterized protein from Saccharomyces cerevisiae (strain ATCC 204508 / S288c) (Baker's yeast).